Reading from the N-terminus, the 633-residue chain is uncharacterized protein (633 aa).

The disordered stretch occupies residues 12-43 (ESGTNNYSDTIANGNTLPPRSKKGHSGRRKRS). Positions 13–29 (SGTNNYSDTIANGNTLP) are enriched in polar residues. A compositionally biased stretch (basic residues) spans 31 to 42 (RSKKGHSGRRKR). The next 2 membrane-spanning stretches (helical) occupy residues 99-118 (ILFG…SSAL) and 217-233 (NCAF…ITAC). Positions 593–612 (DAETNKATGSAKSENIETKS) are disordered.

It localises to the membrane. This is an uncharacterized protein from Saccharomyces cerevisiae (strain ATCC 204508 / S288c) (Baker's yeast).